The primary structure comprises 281 residues: Translation initiation factor IF3-4, chloroplastic (281 aa).

The transit peptide at 1–51 (MAGITSTVGFNAILAGATKTVSHPVKSKLFGLRLCVPEFSIVSLSPYHHRR) directs the protein to the chloroplast. Disordered regions lie at residues 63–86 (GGGG…DDSL) and 253–281 (KVQE…TQDI). Basic and acidic residues-rich tracts occupy residues 70–79 (PGDRRGRQKE) and 253–270 (KVQE…DDKV).

Belongs to the IF-3 family. Monomer.

It is found in the plastid. The protein localises to the chloroplast. Functionally, chloroplast translation initiation factor that is essential for the coordination of leaf and chloroplast development. IF-3 binds to the 30S ribosomal subunit and shifts the equilibrium between 70S ribosomes and their 50S and 30S subunits in favor of the free subunits, thus enhancing the availability of 30S subunits on which protein synthesis initiation begins. The polypeptide is Translation initiation factor IF3-4, chloroplastic (Arabidopsis thaliana (Mouse-ear cress)).